The chain runs to 180 residues: Ribosome maturation factor RimM (180 aa).

Residues Pro97 to Leu169 enclose the PRC barrel domain.

Belongs to the RimM family. As to quaternary structure, binds ribosomal protein uS19.

Its subcellular location is the cytoplasm. Functionally, an accessory protein needed during the final step in the assembly of 30S ribosomal subunit, possibly for assembly of the head region. Essential for efficient processing of 16S rRNA. May be needed both before and after RbfA during the maturation of 16S rRNA. It has affinity for free ribosomal 30S subunits but not for 70S ribosomes. This Bacteroides fragilis (strain YCH46) protein is Ribosome maturation factor RimM.